We begin with the raw amino-acid sequence, 878 residues long: Phosphoenolpyruvate carboxylase (878 aa).

Catalysis depends on residues His137 and Lys545.

Belongs to the PEPCase type 1 family. The cofactor is Mg(2+).

The enzyme catalyses oxaloacetate + phosphate = phosphoenolpyruvate + hydrogencarbonate. Its function is as follows. Forms oxaloacetate, a four-carbon dicarboxylic acid source for the tricarboxylic acid cycle. The polypeptide is Phosphoenolpyruvate carboxylase (Yersinia pestis bv. Antiqua (strain Antiqua)).